Here is a 144-residue protein sequence, read N- to C-terminus: Urease accessory protein UreE (144 aa).

This sequence belongs to the UreE family.

It is found in the cytoplasm. Functionally, involved in urease metallocenter assembly. Binds nickel. Probably functions as a nickel donor during metallocenter assembly. The chain is Urease accessory protein UreE from Thermosynechococcus vestitus (strain NIES-2133 / IAM M-273 / BP-1).